Here is a 180-residue protein sequence, read N- to C-terminus: Large ribosomal subunit protein uL5 (180 aa).

It belongs to the universal ribosomal protein uL5 family. In terms of assembly, part of the 50S ribosomal subunit; part of the 5S rRNA/L5/L18/L25 subcomplex. Contacts the 5S rRNA and the P site tRNA. Forms a bridge to the 30S subunit in the 70S ribosome.

Its function is as follows. This is one of the proteins that bind and probably mediate the attachment of the 5S RNA into the large ribosomal subunit, where it forms part of the central protuberance. In the 70S ribosome it contacts protein S13 of the 30S subunit (bridge B1b), connecting the 2 subunits; this bridge is implicated in subunit movement. Contacts the P site tRNA; the 5S rRNA and some of its associated proteins might help stabilize positioning of ribosome-bound tRNAs. The protein is Large ribosomal subunit protein uL5 of Symbiobacterium thermophilum (strain DSM 24528 / JCM 14929 / IAM 14863 / T).